The chain runs to 391 residues: NADH-quinone oxidoreductase subunit D (391 aa).

It belongs to the complex I 49 kDa subunit family. In terms of assembly, NDH-1 is composed of 14 different subunits. Subunits NuoB, C, D, E, F, and G constitute the peripheral sector of the complex.

It localises to the cell inner membrane. The enzyme catalyses a quinone + NADH + 5 H(+)(in) = a quinol + NAD(+) + 4 H(+)(out). Functionally, NDH-1 shuttles electrons from NADH, via FMN and iron-sulfur (Fe-S) centers, to quinones in the respiratory chain. The immediate electron acceptor for the enzyme in this species is believed to be ubiquinone. Couples the redox reaction to proton translocation (for every two electrons transferred, four hydrogen ions are translocated across the cytoplasmic membrane), and thus conserves the redox energy in a proton gradient. This is NADH-quinone oxidoreductase subunit D from Rickettsia felis (strain ATCC VR-1525 / URRWXCal2) (Rickettsia azadi).